The following is a 160-amino-acid chain: Allophycocyanin alpha chain (160 aa).

Position 70 is an N4-methylasparagine (asparagine 70). (2R,3E)-phycocyanobilin is bound at residue cysteine 80.

It belongs to the phycobiliprotein family. In terms of assembly, component of the phycobilisome. Heterodimer of an alpha and a beta chain. In terms of processing, contains one covalently linked phycocyanobilin chromophore.

The protein localises to the cellular thylakoid membrane. In terms of biological role, light-harvesting photosynthetic bile pigment-protein from the phycobiliprotein complex. Allophycocyanin has a maximum absorption at approximately 650 nanometers. This Mastigocladus laminosus (Fischerella sp.) protein is Allophycocyanin alpha chain (apcA).